The chain runs to 393 residues: Formate-dependent phosphoribosylglycinamide formyltransferase (393 aa).

N(1)-(5-phospho-beta-D-ribosyl)glycinamide contacts are provided by residues 15–16 and Glu-75; that span reads EL. ATP-binding positions include Arg-107, Lys-148, 153–158, 188–191, and Glu-196; these read SSGKGQ and EEYI. Positions 112 to 302 constitute an ATP-grasp domain; it reads NLAAEKLAIK…EFELHLRAIL (191 aa). Positions 261 and 273 each coordinate Mg(2+). Residues Asp-280, Lys-350, and 357–358 contribute to the N(1)-(5-phospho-beta-D-ribosyl)glycinamide site; that span reads RR.

Belongs to the PurK/PurT family. As to quaternary structure, homodimer.

It catalyses the reaction N(1)-(5-phospho-beta-D-ribosyl)glycinamide + formate + ATP = N(2)-formyl-N(1)-(5-phospho-beta-D-ribosyl)glycinamide + ADP + phosphate + H(+). It participates in purine metabolism; IMP biosynthesis via de novo pathway; N(2)-formyl-N(1)-(5-phospho-D-ribosyl)glycinamide from N(1)-(5-phospho-D-ribosyl)glycinamide (formate route): step 1/1. Its function is as follows. Involved in the de novo purine biosynthesis. Catalyzes the transfer of formate to 5-phospho-ribosyl-glycinamide (GAR), producing 5-phospho-ribosyl-N-formylglycinamide (FGAR). Formate is provided by PurU via hydrolysis of 10-formyl-tetrahydrofolate. The protein is Formate-dependent phosphoribosylglycinamide formyltransferase of Prochlorococcus marinus (strain SARG / CCMP1375 / SS120).